A 315-amino-acid polypeptide reads, in one-letter code: BTB/POZ domain-containing adapter for CUL3-mediated RhoA degradation protein 3 (315 aa).

The residue at position 1 (Met1) is an N-acetylmethionine. A Phosphoserine modification is found at Ser23. Residues 32–100 (KYVKLNVGGA…LRDGGVPLPE (69 aa)) enclose the BTB domain. A PCNA-binding motif is present at residues 239 to 245 (QTKVEFP). The disordered stretch occupies residues 269–294 (NALLEATGGAAGRSHHLDEDEERERE).

This sequence belongs to the BACURD family. As to quaternary structure, homotetramer; forms a two-fold symmetric tetramer in solution. Interacts with CUL3; interaction is direct and forms a 5:5 heterodecamer. Component of the BCR(BACURD3) E3 ubiquitin ligase complex, at least composed of CUL3, KCTD10/BACURD3 and RBX1. Interacts with DNA polymerase delta subunit 2/POLD2. Interacts with PCNA. Associated with the tectonic-like complex (also named B9 complex); however as Kctd10 has not been identified in all tectonic-like complexes purifications it is unclear whether it is really part of the complex.

It is found in the nucleus. It functions in the pathway protein modification; protein ubiquitination. Substrate-specific adapter of a BCR (BTB-CUL3-RBX1) E3 ubiquitin-protein ligase complex. The BCR(BACURD3) E3 ubiquitin ligase complex mediates the ubiquitination of target proteins, leading to their degradation by the proteasome. The sequence is that of BTB/POZ domain-containing adapter for CUL3-mediated RhoA degradation protein 3 (Kctd10) from Mus musculus (Mouse).